The following is a 570-amino-acid chain: Urease subunit alpha (570 aa).

Positions 131-570 (GGFDSHIHFI…LPMAQRYFLF (440 aa)) constitute a Urease domain. The Ni(2+) site is built by His-136, His-138, and Lys-219. Lys-219 is modified (N6-carboxylysine). A substrate-binding site is contributed by His-221. Ni(2+) contacts are provided by His-248 and His-274. Residue His-322 is the Proton donor of the active site. Ni(2+) is bound at residue Asp-362.

Belongs to the metallo-dependent hydrolases superfamily. Urease alpha subunit family. As to quaternary structure, heterotrimer of UreA (gamma), UreB (beta) and UreC (alpha) subunits. Three heterotrimers associate to form the active enzyme. Ni cation serves as cofactor. Post-translationally, carboxylation allows a single lysine to coordinate two nickel ions.

It localises to the cytoplasm. It catalyses the reaction urea + 2 H2O + H(+) = hydrogencarbonate + 2 NH4(+). It functions in the pathway nitrogen metabolism; urea degradation; CO(2) and NH(3) from urea (urease route): step 1/1. The chain is Urease subunit alpha from Beijerinckia indica subsp. indica (strain ATCC 9039 / DSM 1715 / NCIMB 8712).